Here is a 942-residue protein sequence, read N- to C-terminus: Protein ZDS2 (942 aa).

Residues 1–28 (MVLMEDMQNKDGHNTVENSSGGTDSNNN) are disordered. The segment covering 15–28 (TVENSSGGTDSNNN) has biased composition (polar residues). Position 50 is a phosphoserine (Ser-50). Disordered regions lie at residues 91–142 (SRNS…DDSI), 483–541 (SQES…NSSN), 617–654 (VVSS…KNSL), 682–728 (VKKE…DIDT), and 788–817 (SRDT…ISTL). A compositionally biased stretch (basic and acidic residues) spans 99–122 (SSKESLQESLHEENIIRSEQKEEQ). The span at 123–134 (GSEDNDAYEEGD) shows a compositional bias: acidic residues. Low complexity-rich tracts occupy residues 483 to 497 (SQES…SNNS), 518 to 541 (SSSE…NSSN), and 617 to 627 (VVSSSESQPSK). Residues 682 to 704 (VKKELKKKASHSSLSKFRKSPKK) show a composition bias toward basic residues. The segment covering 807-816 (TSPTAPQIST) has biased composition (polar residues).

To yeast ZDS1/NRC1/CES1. Interacts with SKG6.

Acts as a negative regulator of polarized growth via an alternative mechanism to ZDS1. In heat-stressed cells appears to play a role in localizing BCY1 to the cytoplasm. Seems to interact with, and down-regulate, CDC42. Also acts as a suppressor of PKC1. May act as an integration point for distinct signaling pathways helping to maintain a balance among these different pathways. This chain is Protein ZDS2 (ZDS2), found in Saccharomyces cerevisiae (strain ATCC 204508 / S288c) (Baker's yeast).